Reading from the N-terminus, the 430-residue chain is Purine nucleoside phosphorylase LACC1 (430 aa).

Lysine 247 is subject to N6-acetyllysine. Positions 250, 284, and 301 each coordinate Zn(2+).

It belongs to the purine nucleoside phosphorylase YfiH/LACC1 family. Interacts with FASN. Interacts with SDHA. Interacts with ATF6, EIF2AK3 and ERN1. Phosphorylated on tyrosine residues. Ubiquitously expressed, with higher expression levels in immune-related tissues such as lymph nodes and spleen. Expressed in both intestinal and peripheral myeloid-derived cells.

The protein localises to the cytoplasm. The protein resides in the nucleus. Its subcellular location is the endoplasmic reticulum. It is found in the peroxisome. The catalysed reaction is adenosine + phosphate = alpha-D-ribose 1-phosphate + adenine. The enzyme catalyses inosine + phosphate = alpha-D-ribose 1-phosphate + hypoxanthine. It carries out the reaction guanosine + phosphate = alpha-D-ribose 1-phosphate + guanine. It catalyses the reaction S-methyl-5'-thioadenosine + phosphate = 5-(methylsulfanyl)-alpha-D-ribose 1-phosphate + adenine. The catalysed reaction is adenosine + H2O + H(+) = inosine + NH4(+). Purine nucleoside enzyme that catalyzes the phosphorolysis of adenosine, guanosine and inosine nucleosides, yielding D-ribose 1-phosphate and the respective free bases, adenine, guanine and hypoxanthine. Also catalyzes the phosphorolysis of S-methyl-5'-thioadenosine into adenine and S-methyl-5-thio-alpha-D-ribose 1-phosphate. Also has adenosine deaminase activity. Acts as a regulator of innate immunity in macrophages by modulating the purine nucleotide metabolism, thereby regulating the metabolic function and bioenergetic state of macrophages. Enables a purine nucleotide cycle between adenosine and inosine monophosphate and adenylosuccinate that prevents cytoplasmic acidification and balances the cytoplasmic-mitochondrial redox interface. The purine nucleotide cycle consumes aspartate and releases fumarate in a manner involving fatty acid oxidation and ATP-citrate lyase activity. Participates in pattern recognition receptor (PRR)-induced cytokines in macrophages: associates with the NOD2-signaling complex and promotes optimal NOD2-induced signaling, cytokine secretion and bacterial clearance. Localizes to the endoplasmic reticulum upon PRR stimulation of macrophages and associates with endoplasmic reticulum-stress sensors, promoting the endoplasmic reticulum unfolded protein response (UPR). Does not show laccase activity. The sequence is that of Purine nucleoside phosphorylase LACC1 from Homo sapiens (Human).